A 98-amino-acid chain; its full sequence is Small ribosomal subunit protein uS19 (98 aa).

It belongs to the universal ribosomal protein uS19 family.

Functionally, protein S19 forms a complex with S13 that binds strongly to the 16S ribosomal RNA. This chain is Small ribosomal subunit protein uS19, found in Chlorobaculum parvum (strain DSM 263 / NCIMB 8327) (Chlorobium vibrioforme subsp. thiosulfatophilum).